Reading from the N-terminus, the 574-residue chain is Man(5)GlcNAc(2)-PP-dolichol translocation protein RFT1 (574 aa).

Residues 1-24 are Lumenal-facing; it reads MAKKNSQLPSTSEQILERSTTGAT. A helical membrane pass occupies residues 25–45; the sequence is FLMMGQLFTKLVTFILNNLLI. Over 46–48 the chain is Cytoplasmic; the sequence is RFL. Residues 49–69 form a helical membrane-spanning segment; it reads SPRIFGITAFLEFIQGTVLFF. Over 70–110 the chain is Lumenal; the sequence is SRDAIRLSTLRISDSGNGIIDDDDEEEYQETHYKSKVLQTA. The chain crosses the membrane as a helical span at residues 111 to 131; sequence VNFAYIPFWIGFPLSIGLIAW. Residues 132–148 lie on the Cytoplasmic side of the membrane; sequence QYRNINAYFITLPFFRW. A helical membrane pass occupies residues 149 to 169; it reads SIFLIWLSIIVELLSEPFFIV. At 170 to 181 the chain is on the lumenal side; that stretch reads NQFMLNYAARSR. Residues 182–202 traverse the membrane as a helical segment; it reads FESIAVTTGCIVNFIVVYAVQ. Topologically, residues 203 to 218 are cytoplasmic; sequence QSRYPMGVVTSDIDKE. The helical transmembrane segment at 219 to 239 threads the bilayer; the sequence is GIAILAFALGKLAHSITLLAC. Residues 240–319 are Lumenal-facing; sequence YYWDYLKNFK…INSLCTVEEQ (80 aa). The chain crosses the membrane as a helical span at residues 320-340; that stretch reads GIYALLSNYGSLLTRLLFAPI. Over 341–372 the chain is Cytoplasmic; the sequence is EESLRLFLARLLSSHNPKNLKLSIEVLVNLTR. Residues 373 to 393 form a helical membrane-spanning segment; sequence FYIYLSLMIIVFGPANSSFLL. The Lumenal segment spans residues 394–413; that stretch reads QFLIGSKWSTTSVLDTIRVY. A helical membrane pass occupies residues 414 to 434; sequence CFYIPFLSLNGIFEAFFQSVA. At 435 to 443 the chain is on the cytoplasmic side; that stretch reads TGDQILKHS. The helical transmembrane segment at 444–464 threads the bilayer; sequence YFMMAFSGIFLLNSWLLIEKL. At 465–469 the chain is on the lumenal side; the sequence is KLSIE. A helical transmembrane segment spans residues 470–490; that stretch reads GLILSNIINMVLRILYCGVFL. Residues 491-509 lie on the Cytoplasmic side of the membrane; sequence NKFHRELFTDSSFFFNFKD. Residues 510–530 form a helical membrane-spanning segment; that stretch reads FKTVIIAGSTICLLDWWFIGY. Topologically, residues 531 to 532 are lumenal; it reads VK. A helical membrane pass occupies residues 533 to 553; the sequence is NLQQFVVNVLFAMGLLALILV. Topologically, residues 554–574 are cytoplasmic; that stretch reads KERQTIQSFINKRAVSNSKDV.

The protein belongs to the RFT1 family.

It localises to the endoplasmic reticulum membrane. It functions in the pathway protein modification; protein glycosylation. In terms of biological role, intramembrane glycolipid transporter that operates in the biosynthetic pathway of dolichol-linked oligosaccharides, the glycan precursors employed in protein asparagine (N)-glycosylation. The sequential addition of sugars to dolichol pyrophosphate produces dolichol-linked oligosaccharides containing fourteen sugars, including two GlcNAcs, nine mannoses and three glucoses. Once assembled, the oligosaccharide is transferred from the lipid to nascent proteins by oligosaccharyltransferases. The assembly of dolichol-linked oligosaccharides begins on the cytosolic side of the endoplasmic reticulum membrane and finishes in its lumen. RFT1 could mediate the translocation of the cytosolically oriented intermediate DolPP-GlcNAc2Man5, produced by ALG11, into the ER lumen where dolichol-linked oligosaccharides assembly continues. However, the intramembrane lipid transporter activity could not be confirmed in vitro. This Saccharomyces cerevisiae (strain ATCC 204508 / S288c) (Baker's yeast) protein is Man(5)GlcNAc(2)-PP-dolichol translocation protein RFT1.